We begin with the raw amino-acid sequence, 480 residues long: Acetylxylan esterase (480 aa).

An N-terminal signal peptide occupies residues 1–19; sequence MNRKLFMTGLLMLAMTMQA.

It belongs to the AB hydrolase superfamily.

It carries out the reaction Deacetylation of xylans and xylo-oligosaccharides.. Its pathway is glycan degradation; xylan degradation. Its function is as follows. Involved in degradation of plant cell wall polysaccharides. Is an acetyl esterase with broad substrate specificity, releasing acetic acid from acetylated xylo-oligosaccharides and acetylated xylan as well as xylose-tetraacetate, 4-O-methylumbelliferyl acetate, glucose-pentaacetate, and cephalosporin C. Appears to have greater activity on oligosaccharides than on polymeric substrates. Is also able to release acetic acid from xylo-oligosaccharides with 4-O-methylglucuronic acid side groups proximally located to O-acetyl esters. Preferentially targets xylo-oligosaccharides possessing three or more O-acetyl groups, but following their depletion it is active on the less acetylated portion of the substrate. The protein is Acetylxylan esterase of Xylanibacter ruminicola (strain ATCC 19189 / DSM 19721 / CIP 105475 / JCM 8958 / 23) (Prevotella ruminicola).